An 89-amino-acid chain; its full sequence is uncharacterized protein (89 aa).

This is an uncharacterized protein from Sinorhizobium fredii (strain NBRC 101917 / NGR234).